The primary structure comprises 156 residues: Nucleoredoxin-like protein 2 (156 aa).

The Thioredoxin domain maps to arginine 9–alanine 147.

The protein belongs to the nucleoredoxin family. As to expression, both isoforms are expressed in retina, in the photoreceptor layer, and throughout the olfactory sensory neuron layer of the nasal epithelium, in neurons. Also expressed at low levels in brain and testis.

May be involved in the maintenance of both the function and the viability of sensory neurons, including photoreceptors and olfactory neurons. In the retina, isoform 1 may be required for rod function and isoform 2 for cone viability and function. The chain is Nucleoredoxin-like protein 2 (Nxnl2) from Mus musculus (Mouse).